The chain runs to 107 residues: Thioredoxin-1 (107 aa).

The Thioredoxin domain occupies alanine 2–lysine 106. Active-site nucleophile residues include cysteine 31 and cysteine 34. A disulfide bond links cysteine 31 and cysteine 34.

Belongs to the thioredoxin family. As to expression, ovary specific. Expressed present in the nurse cells from stage 9 of ovary development and is transported into the oocyte. Expressed throughout oogenesis.

The protein localises to the nucleus. Participates in various redox reactions through the reversible oxidation of its active center dithiol to a disulfide and catalyzes dithiol-disulfide exchange reactions. As a reducing substrate of peroxiredoxin 1, thioredoxin 2 is preferred over thioredoxin 1. Required for female meiosis and early embryonic development. The chain is Thioredoxin-1 (dhd) from Drosophila melanogaster (Fruit fly).